Reading from the N-terminus, the 381-residue chain is Beta-lactamase CMY-2 (381 aa).

Residues 1-20 (MMKKSLCCALLLTASFSTFA) form the signal peptide. Ser84 (acyl-ester intermediate) is an active-site residue. A beta-lactam-binding residues include Ser84, Gln140, Tyr170, and Asn172.

The protein belongs to the class-C beta-lactamase family.

It catalyses the reaction a beta-lactam + H2O = a substituted beta-amino acid. Its activity is regulated as follows. Inhibited by the beta-lactamase-blocking agents sulbactam, tazobactam, avibactam and 3-aminophenylboronic acid (APB). Functionally, class C beta-lactamase which confers resistance to penicillins and cephalosporins. Has nitrocefin-, cefoxitin- and cefoperazone-hydrolyzing activities. This chain is Beta-lactamase CMY-2, found in Klebsiella pneumoniae.